A 562-amino-acid polypeptide reads, in one-letter code: NAD-dependent histone deacetylase SIR2 (562 aa).

Residues 1–67 (MTIPHMKYAV…RETNTTDPLG (67 aa)) form a disordered region. Polar residues predominate over residues 11-25 (SKTSENKVSNTVSPT). Basic and acidic residues predominate over residues 26–36 (QDKDAIRKQPD). The Deacetylase sirtuin-type domain maps to 237–527 (RLSNFFTIDH…AMVAQKCGWT (291 aa)). NAD(+)-binding positions include 262 to 281 (GAGV…EGFY) and 344 to 347 (QNID). The Proton acceptor role is filled by H364. Zn(2+) is bound by residues C372, C375, C396, and C399. NAD(+)-binding positions include 471–473 (GTS), 496–498 (NRD), and C513.

The protein belongs to the sirtuin family. Class I subfamily. In terms of assembly, homomultimer. Forms a complex with SIR3 and SIR4. Component of the RENT complex, at least composed of SIR2, CDC14 and NET1. The RENT complex interacts with FOB1. Interacts with ESC8. Interacts with and ZDS2. Interacts with MCM10. Interacts with SLX5. Interacts with NSI1. It depends on Zn(2+) as a cofactor.

It is found in the nucleus. It localises to the nucleolus. It carries out the reaction N(6)-acetyl-L-lysyl-[protein] + NAD(+) + H2O = 2''-O-acetyl-ADP-D-ribose + nicotinamide + L-lysyl-[protein]. Its activity is increased by calorie restriction, which slows the pace of aging and increases maximum lifespan. Activated by resveratrol (3,5,4'-trihydroxy-trans-stilbene), which is found in red wine. Functionally, NAD-dependent deacetylase, which participates in a wide range of cellular events including chromosome silencing, chromosome segregation, DNA recombination and the determination of life span. Involved in transcriptional repression of the silent mating-type loci HML and HMR and telomeric silencing via its association with SIR3 and SIR4. Plays a central role in ribosomal DNA (rDNA) silencing via its association with the RENT complex, preventing hyperrecombination, and repressing transcription from foreign promoters, which contributes to extending life span. Probably represses transcription via the formation of heterochromatin structure, which involves the compaction of chromatin fiber into a more condensed form, although this complex in at least one case can still bind euchromatic levels of positive transcription regulators. Although it displays some NAD-dependent histone deacetylase activity on histone H3K9Ac and H3K14Ac and histone H4K16Ac in vitro, such activity is unclear in vivo and may not be essential. The chain is NAD-dependent histone deacetylase SIR2 (SIR2) from Saccharomyces cerevisiae (strain ATCC 204508 / S288c) (Baker's yeast).